The following is a 220-amino-acid chain: Ribose-5-phosphate isomerase A (220 aa).

Residues 28 to 31, 81 to 84, and 94 to 97 each bind substrate; these read TGST, DGAD, and KGGG. The Proton acceptor role is filled by Glu103. Lys121 is a binding site for substrate.

Belongs to the ribose 5-phosphate isomerase family. In terms of assembly, homodimer.

It catalyses the reaction aldehydo-D-ribose 5-phosphate = D-ribulose 5-phosphate. It participates in carbohydrate degradation; pentose phosphate pathway; D-ribose 5-phosphate from D-ribulose 5-phosphate (non-oxidative stage): step 1/1. In terms of biological role, catalyzes the reversible conversion of ribose-5-phosphate to ribulose 5-phosphate. This Leptothrix cholodnii (strain ATCC 51168 / LMG 8142 / SP-6) (Leptothrix discophora (strain SP-6)) protein is Ribose-5-phosphate isomerase A.